A 257-amino-acid chain; its full sequence is Large ribosomal subunit protein uL2 (257 aa).

The tract at residues valine 207–alanine 231 is disordered.

It belongs to the universal ribosomal protein uL2 family. Component of the large ribosomal subunit.

It is found in the cytoplasm. Its function is as follows. Component of the large ribosomal subunit. The ribosome is a large ribonucleoprotein complex responsible for the synthesis of proteins in the cell. The protein is Large ribosomal subunit protein uL2 (rpl8) of Xenopus tropicalis (Western clawed frog).